The sequence spans 432 residues: Negative regulator of systemic acquired resistance SNI1 (432 aa).

In terms of assembly, interacts with SSN2. Binds to NTL9/CBNAC to promote its binding to promoters of target genes. Component of the SMC5-SMC6 complex which consists at least of SMC5 and SMC6B. Interacts with RAD17. In terms of tissue distribution, expressed at low levels in the veins.

It localises to the nucleus. Functionally, component of the SMC5-SMC6 complex, a complex involved in repair of DNA double-strand breaks by homologous recombination. Transcription repressor that prevents expression of pathogenesis-related genes (PR) via histone modifications and binding negative cis-acting elements at their promoters. Negative regulator of hypersensitive response (HR) and systemic acquired resistance (SAR) required to dampen the basal expression of pathogenesis related (PR) genes. Functions synergistically with NTL9/CBNAC as negative regulator of pathogen-induced PR1 expression and basal resistance to a virulent strain of P.syringae. Binds to the PR1 gene promoter to suppress defense response in the absence of pathogen challenge and is removed in response to induction. Negatively regulates both gene expression and DNA recombination during pathogen infection, thus being involved in short-term defense response and a long-term survival strategy. Prevents effective immune responses that involve activation of DNA damage responses, probably by negatively regulating the DNA damage sensors RAD17 and ATR. Negative regulator of defenses against the beet cyst nematode H.schachtii. The protein is Negative regulator of systemic acquired resistance SNI1 of Arabidopsis thaliana (Mouse-ear cress).